Reading from the N-terminus, the 540-residue chain is Phosphomethylpyrimidine synthase (540 aa).

Residues asparagine 143, methionine 172, tyrosine 201, histidine 237, 257 to 259 (SRG), 298 to 301 (DGLR), and glutamate 337 each bind substrate. Histidine 341 contributes to the Zn(2+) binding site. Position 364 (tyrosine 364) interacts with substrate. Histidine 405 contacts Zn(2+). [4Fe-4S] cluster contacts are provided by cysteine 485, cysteine 488, and cysteine 493.

This sequence belongs to the ThiC family. It depends on [4Fe-4S] cluster as a cofactor.

The enzyme catalyses 5-amino-1-(5-phospho-beta-D-ribosyl)imidazole + S-adenosyl-L-methionine = 4-amino-2-methyl-5-(phosphooxymethyl)pyrimidine + CO + 5'-deoxyadenosine + formate + L-methionine + 3 H(+). It functions in the pathway cofactor biosynthesis; thiamine diphosphate biosynthesis. In terms of biological role, catalyzes the synthesis of the hydroxymethylpyrimidine phosphate (HMP-P) moiety of thiamine from aminoimidazole ribotide (AIR) in a radical S-adenosyl-L-methionine (SAM)-dependent reaction. The chain is Phosphomethylpyrimidine synthase from Mycobacterium avium (strain 104).